The chain runs to 335 residues: Phosphate acyltransferase (335 aa).

The protein belongs to the PlsX family. As to quaternary structure, homodimer. Probably interacts with PlsY.

The protein resides in the cytoplasm. The catalysed reaction is a fatty acyl-[ACP] + phosphate = an acyl phosphate + holo-[ACP]. It participates in lipid metabolism; phospholipid metabolism. Functionally, catalyzes the reversible formation of acyl-phosphate (acyl-PO(4)) from acyl-[acyl-carrier-protein] (acyl-ACP). This enzyme utilizes acyl-ACP as fatty acyl donor, but not acyl-CoA. In Streptococcus pyogenes serotype M6 (strain ATCC BAA-946 / MGAS10394), this protein is Phosphate acyltransferase.